A 234-amino-acid chain; its full sequence is bZIP transcription factor 27 (234 aa).

The Nuclear localization signal signature appears at 152–159 (KKRGQDSD). The region spanning 163 to 213 (GDRRYKRMIKNRESAARSRARKQAYTNELELEIAHLQTENARLKIQQEQLK) is the bZIP domain. The tract at residues 165-184 (RRYKRMIKNRESAARSRARK) is basic motif. The segment at 191-212 (LELEIAHLQTENARLKIQQEQL) is leucine-zipper. Thr231 is subject to Phosphothreonine.

This sequence belongs to the bZIP family. Self-interacts. Interacts with FT and FD/BZIP14. Interacts with CPK33. Phosphorylated. In terms of tissue distribution, expressed on the flanks of the shoot apex.

It localises to the nucleus. Functionally, transcription factor required for the transition to flowering promoted by FT. The polypeptide is bZIP transcription factor 27 (Arabidopsis thaliana (Mouse-ear cress)).